The following is a 341-amino-acid chain: Glycerol-3-phosphate dehydrogenase [NAD(P)+] (341 aa).

Residues serine 14, phenylalanine 15, arginine 35, and lysine 108 each contribute to the NADPH site. Sn-glycerol 3-phosphate contacts are provided by lysine 108 and glycine 136. Residue alanine 140 coordinates NADPH. Positions 191, 244, 254, 255, and 256 each coordinate sn-glycerol 3-phosphate. The Proton acceptor role is filled by lysine 191. Position 255 (arginine 255) interacts with NADPH. NADPH contacts are provided by valine 279 and glutamate 281.

It belongs to the NAD-dependent glycerol-3-phosphate dehydrogenase family.

It is found in the cytoplasm. The catalysed reaction is sn-glycerol 3-phosphate + NAD(+) = dihydroxyacetone phosphate + NADH + H(+). The enzyme catalyses sn-glycerol 3-phosphate + NADP(+) = dihydroxyacetone phosphate + NADPH + H(+). It participates in membrane lipid metabolism; glycerophospholipid metabolism. Its function is as follows. Catalyzes the reduction of the glycolytic intermediate dihydroxyacetone phosphate (DHAP) to sn-glycerol 3-phosphate (G3P), the key precursor for phospholipid synthesis. The polypeptide is Glycerol-3-phosphate dehydrogenase [NAD(P)+] (Pseudomonas syringae pv. syringae (strain B728a)).